A 159-amino-acid polypeptide reads, in one-letter code: Phosphopantetheine adenylyltransferase (159 aa).

Threonine 10 is a substrate binding site. Residues 10 to 11 (TF) and histidine 18 contribute to the ATP site. Residues lysine 42, methionine 74, and arginine 88 each contribute to the substrate site. Residues 89–91 (GLR), glutamate 99, and 124–130 (WSFISSS) contribute to the ATP site.

It belongs to the bacterial CoaD family. As to quaternary structure, homohexamer. Mg(2+) serves as cofactor.

The protein resides in the cytoplasm. The enzyme catalyses (R)-4'-phosphopantetheine + ATP + H(+) = 3'-dephospho-CoA + diphosphate. It participates in cofactor biosynthesis; coenzyme A biosynthesis; CoA from (R)-pantothenate: step 4/5. Reversibly transfers an adenylyl group from ATP to 4'-phosphopantetheine, yielding dephospho-CoA (dPCoA) and pyrophosphate. This Escherichia coli (strain UTI89 / UPEC) protein is Phosphopantetheine adenylyltransferase.